Consider the following 188-residue polypeptide: uncharacterized protein (188 aa).

Residues 62 to 77 (ITGEKPLIKLNESTEK) carry the L5-specific motif motif.

Its subcellular location is the mitochondrion. This is an uncharacterized protein from Dictyostelium discoideum (Social amoeba).